The chain runs to 130 residues: Small ribosomal subunit protein uS8 (130 aa).

It belongs to the universal ribosomal protein uS8 family. Part of the 30S ribosomal subunit. Contacts proteins S5 and S12.

In terms of biological role, one of the primary rRNA binding proteins, it binds directly to 16S rRNA central domain where it helps coordinate assembly of the platform of the 30S subunit. This Pseudomonas aeruginosa (strain UCBPP-PA14) protein is Small ribosomal subunit protein uS8.